We begin with the raw amino-acid sequence, 1055 residues long: Cellulose synthase A catalytic subunit 9 [UDP-forming] (1055 aa).

The Cytoplasmic portion of the chain corresponds to 1-268 (MEASAGLVAG…ASSKVNPYRM (268 aa)). 8 residues coordinate Zn(2+): C37, C40, C56, C59, C64, C67, C79, and C82. The RING-type; degenerate zinc finger occupies 37 to 83 (CEICGDEVGRTVDGDLFVACNECGFPVCRPCYEYERREGTQNCPQCK). Residues 269–289 (VIILRLVVLGFFLRYRILHPV) form a helical membrane-spanning segment. Topologically, residues 290 to 291 (PD) are extracellular. Residues 292-312 (AIPLWLTSIICEIWFAVSWIL) traverse the membrane as a helical segment. Topologically, residues 313–831 (DQFPKWYPID…LERFSYINTT (519 aa)) are cytoplasmic. The UDP-alpha-D-glucose site is built by S351, K357, E358, and D387. D387 is a catalytic residue. A coiled-coil region spans residues 439-468 (NFVQERRAMKREYEEFKVRINALVAKAQKV). A UDP-alpha-D-glucose-binding site is contributed by K528. The Mn(2+) site is built by K529 and D553. The active site involves D753. The chain crosses the membrane as a helical span at residues 832–852 (IYPFTSLPLLAYCTLPAVCLL). Over 853–860 (TGKFIMPP) the chain is Extracellular. Residues 861-881 (ISTFASLFFIALFISIFATGI) traverse the membrane as a helical segment. Over 882 to 899 (LEMRWSGVSIEEWWRNEQ) the chain is Cytoplasmic. A helical membrane pass occupies residues 900–920 (FWVIGGVSAHLFAVVQGLLKV). Residues 921-951 (LAGIDTNFTVTSKATGDEDDEFAELYAFKWT) are Extracellular-facing. The N-linked (GlcNAc...) asparagine glycan is linked to N927. Residues 952-972 (TLLIPPTTLLILNIIGVVAGV) form a helical membrane-spanning segment. Residues 973–983 (SDAINNGSEAW) are Cytoplasmic-facing. Residues 984–1004 (GPLFGKLFFAFWVIVHLYPFL) form a helical membrane-spanning segment. Over 1005–1013 (KGLMGRQNR) the chain is Extracellular. Residues 1014–1034 (TPTIVVIWSVLLASIFSLLWV) traverse the membrane as a helical segment. Topologically, residues 1035–1055 (RIDPFTIKARGPDVRQCGINC) are cytoplasmic.

Belongs to the glycosyltransferase 2 family. Plant cellulose synthase subfamily. Mn(2+) serves as cofactor. It depends on Zn(2+) as a cofactor.

It is found in the cell membrane. It catalyses the reaction [(1-&gt;4)-beta-D-glucosyl](n) + UDP-alpha-D-glucose = [(1-&gt;4)-beta-D-glucosyl](n+1) + UDP + H(+). Its pathway is glycan metabolism; plant cellulose biosynthesis. Functionally, catalytic subunit of cellulose synthase terminal complexes ('rosettes'), required for beta-1,4-glucan microfibril crystallization, a major mechanism of the cell wall formation. Involved in the secondary cell wall formation. The polypeptide is Cellulose synthase A catalytic subunit 9 [UDP-forming] (CESA9) (Oryza sativa subsp. indica (Rice)).